A 364-amino-acid polypeptide reads, in one-letter code: 3-dehydroquinate synthase (364 aa).

Residues D75–K80, G109–D113, T133–T134, K146, K155, and T173–T176 contribute to the NAD(+) site. Zn(2+) is bound by residues E188, H251, and H268.

The protein belongs to the sugar phosphate cyclases superfamily. Dehydroquinate synthase family. Co(2+) serves as cofactor. Requires Zn(2+) as cofactor. The cofactor is NAD(+).

It is found in the cytoplasm. The catalysed reaction is 7-phospho-2-dehydro-3-deoxy-D-arabino-heptonate = 3-dehydroquinate + phosphate. Its pathway is metabolic intermediate biosynthesis; chorismate biosynthesis; chorismate from D-erythrose 4-phosphate and phosphoenolpyruvate: step 2/7. Its function is as follows. Catalyzes the conversion of 3-deoxy-D-arabino-heptulosonate 7-phosphate (DAHP) to dehydroquinate (DHQ). This chain is 3-dehydroquinate synthase, found in Dechloromonas aromatica (strain RCB).